The sequence spans 444 residues: Porin AaxA (444 aa).

An N-terminal signal peptide occupies residues 1 to 19; sequence MAFSRFYLLTALYTGGILA. The segment at 42 to 68 is disordered; that stretch reads KNSTQDSDSSPSESSPHPRQEPRRHVL. Residues 46–56 are compositionally biased toward low complexity; it reads QDSDSSPSESS.

It belongs to the OprB family.

It localises to the cell outer membrane. In terms of biological role, facilitates L-arginine uptake, as part of the AaxABC system. The arginine uptake by the bacterium in the macrophage may be a virulence factor against the host innate immune response. This Chlamydia felis (strain Fe/C-56) (Chlamydophila felis) protein is Porin AaxA (aaxA).